An 87-amino-acid polypeptide reads, in one-letter code: UPF0386 protein RSKD131_0371 (87 aa).

It belongs to the UPF0386 family.

This chain is UPF0386 protein RSKD131_0371, found in Cereibacter sphaeroides (strain KD131 / KCTC 12085) (Rhodobacter sphaeroides).